The sequence spans 288 residues: Glucose-1-phosphate thymidylyltransferase (288 aa).

Mg(2+)-binding residues include Asp-108 and Asp-223.

It belongs to the glucose-1-phosphate thymidylyltransferase family. In terms of assembly, homotetramer. Requires Mg(2+) as cofactor.

It carries out the reaction dTTP + alpha-D-glucose 1-phosphate + H(+) = dTDP-alpha-D-glucose + diphosphate. Its function is as follows. Catalyzes the formation of dTDP-glucose, from dTTP and glucose 1-phosphate, as well as its pyrophosphorolysis. This is Glucose-1-phosphate thymidylyltransferase (rmlA) from Neisseria gonorrhoeae.